The chain runs to 374 residues: Small ribosomal subunit protein uS4m (374 aa).

The region spanning 259 to 323 (GRLENFLMRL…KKLYFFIKSK (65 aa)) is the S4 RNA-binding domain.

The protein belongs to the universal ribosomal protein uS4 family.

The protein localises to the mitochondrion. This chain is Small ribosomal subunit protein uS4m (RPS4), found in Acanthamoeba castellanii (Amoeba).